The primary structure comprises 31 residues: Cyclotide mden-N (31 aa).

A cross-link (cyclopeptide (Gly-Asn)) is located at residues G1 to N31. 3 disulfide bridges follow: C5–C21, C9–C23, and C14–C28.

The protein belongs to the cyclotide family. Bracelet subfamily. In terms of processing, this is a cyclic peptide.

Its function is as follows. Probably participates in a plant defense mechanism. In Melicytus dentatus (Tree violet), this protein is Cyclotide mden-N.